A 162-amino-acid polypeptide reads, in one-letter code: Regulator of ribonuclease activity A (162 aa).

Belongs to the RraA family. Homotrimer. Binds to both RNA-binding sites in the C-terminal region of Rne and to RhlB.

Its subcellular location is the cytoplasm. Its function is as follows. Globally modulates RNA abundance by binding to RNase E (Rne) and regulating its endonucleolytic activity. Can modulate Rne action in a substrate-dependent manner by altering the composition of the degradosome. Modulates RNA-binding and helicase activities of the degradosome. In Haemophilus influenzae (strain 86-028NP), this protein is Regulator of ribonuclease activity A.